Here is a 515-residue protein sequence, read N- to C-terminus: Monocarboxylate transporter 10 (515 aa).

Residues 1–48 (MVLSQEEPDSARGTSEAQPLGPAPTGAAPPPGPGPSDSPEAAVEKVEV) are disordered. The Cytoplasmic portion of the chain corresponds to 1–66 (MVLSQEEPDS…EPHEPPEPPE (66 aa)). Over residues 17–26 (AQPLGPAPTG) the composition is skewed to low complexity. The span at 27–36 (AAPPPGPGPS) shows a compositional bias: pro residues. The helical transmembrane segment at 67-87 (GGWGWLVMLAAMWCNGSVFGI) threads the bilayer. Residues 88–114 (QNACGVLFVSMLETFGSKDDDKMVFKT) lie on the Extracellular side of the membrane. A helical membrane pass occupies residues 115 to 135 (AWVGSLSMGMIFFCCPIVSVF). The Cytoplasmic portion of the chain corresponds to 136–144 (TDLFGCRKT). Residues 145–165 (AVVGAAVGFVGLMSSSFVSSI) traverse the membrane as a helical segment. Over 166–171 (EPLYLT) the chain is Extracellular. The helical transmembrane segment at 172 to 192 (YGIIFACGCSFAYQPSLVILG) threads the bilayer. Residues 193 to 200 (HYFKKRLG) are Cytoplasmic-facing. Residues 201-221 (LVNGIVTAGSSVFTILLPLLL) traverse the membrane as a helical segment. Residues 222–228 (RVLIDSV) lie on the Extracellular side of the membrane. Residues 229-249 (GLFYTLRVLCIFMFVLFLAGF) form a helical membrane-spanning segment. Over 250 to 291 (TYRPLATSTKDKESGGSGSSLFSRKKFSPPKKIFNFAIFKVT) the chain is Cytoplasmic. Residue Ser263 is modified to Phosphoserine. A helical transmembrane segment spans residues 292 to 312 (AYAVWAVGIPLALFGYFVPYV). Residues 313-329 (HLMKHVNERFQDEKNKE) lie on the Extracellular side of the membrane. A helical membrane pass occupies residues 330–350 (VVLMCIGVTSGVGRLLFGRIA). Asp351 is a topological domain (cytoplasmic). A helical membrane pass occupies residues 352–372 (YVPGVKKVYLQVLSFFFIGLM). The Extracellular segment spans residues 373–396 (SMMIPLCSIFGALIAVCLIMGLFD). A helical transmembrane segment spans residues 397 to 417 (GCFISIMAPIAFELVGAQDVS). The Cytoplasmic segment spans residues 418–419 (QA). The chain crosses the membrane as a helical span at residues 420-440 (IGFLLGFMSIPMTVGPPIAGL). Topologically, residues 441-451 (LRDKLGSYDVA) are extracellular. The helical transmembrane segment at 452–472 (FYLAGVPPLIGGAVLCFIPWI) threads the bilayer. The Cytoplasmic portion of the chain corresponds to 473-515 (HSKKQREISKTTGKEKMEKMLENQNSLLSSSSGMFKKESDSII). Phosphoserine is present on residues Ser498, Ser501, Ser503, and Ser504.

Belongs to the major facilitator superfamily. Monocarboxylate porter (TC 2.A.1.13) family. In terms of processing, not N-glycosylated. As to expression, strongly expressed in kidney and skeletal muscle and at lower level in placenta and heart.

It is found in the cell membrane. Its subcellular location is the basolateral cell membrane. The catalysed reaction is 3,3',5-triiodo-L-thyronine(out) = 3,3',5-triiodo-L-thyronine(in). It carries out the reaction L-thyroxine(out) = L-thyroxine(in). It catalyses the reaction L-tryptophan(in) = L-tryptophan(out). The enzyme catalyses L-tyrosine(in) = L-tyrosine(out). The catalysed reaction is L-phenylalanine(in) = L-phenylalanine(out). Its function is as follows. Sodium- and proton-independent thyroid hormones and aromatic acids transporter. Mediates both uptake and efflux of 3,5,3'-triiodothyronine (T3) and 3,5,3',5'-tetraiodothyronine (T4) with high affinity, suggesting a role in the homeostasis of thyroid hormone levels. Responsible for low affinity bidirectional transport of the aromatic amino acids, such as phenylalanine, tyrosine, tryptophan and L-3,4-dihydroxyphenylalanine (L-dopa). Plays an important role in homeostasis of aromatic amino acids. This is Monocarboxylate transporter 10 (SLC16A10) from Homo sapiens (Human).